We begin with the raw amino-acid sequence, 555 residues long: Protein FAM234A (555 aa).

Basic and acidic residues predominate over residues 1–22 (MMDNKDLEAEIHPLKNEDKKSQ). Positions 1–40 (MMDNKDLEAEIHPLKNEDKKSQENPGNLPRNEDNLKSKPV) are disordered. The Cytoplasmic segment spans residues 1 to 49 (MMDNKDLEAEIHPLKNEDKKSQENPGNLPRNEDNLKSKPVPSRLSRCRT). At Ser-21 the chain carries Phosphoserine. Residues 50–70 (VAFFLSLFTCLFVVFVLSFII) traverse the membrane as a helical; Signal-anchor for type II membrane protein segment. The Extracellular segment spans residues 71 to 555 (PCPDRPSSQG…FSRLRYRSEM (485 aa)). 5 N-linked (GlcNAc...) asparagine glycosylation sites follow: Asn-116, Asn-120, Asn-317, Asn-392, and Asn-476.

This sequence belongs to the FAM234 family.

The protein localises to the membrane. The chain is Protein FAM234A from Mus musculus (Mouse).